Consider the following 150-residue polypeptide: Macrodomain Ter protein (150 aa).

Belongs to the MatP family. In terms of assembly, homodimer.

Its subcellular location is the cytoplasm. In terms of biological role, required for spatial organization of the terminus region of the chromosome (Ter macrodomain) during the cell cycle. Prevents early segregation of duplicated Ter macrodomains during cell division. Binds specifically to matS, which is a 13 bp signature motif repeated within the Ter macrodomain. The sequence is that of Macrodomain Ter protein from Klebsiella pneumoniae (strain 342).